A 163-amino-acid polypeptide reads, in one-letter code: 6,7-dimethyl-8-ribityllumazine synthase (163 aa).

5-amino-6-(D-ribitylamino)uracil contacts are provided by residues Phe-27, 58–60, and 87–89; these read ALE and CVI. 92 to 93 contacts (2S)-2-hydroxy-3-oxobutyl phosphate; it reads DT. The active-site Proton donor is His-95. A 5-amino-6-(D-ribitylamino)uracil-binding site is contributed by Asn-120. (2S)-2-hydroxy-3-oxobutyl phosphate is bound at residue Arg-134.

This sequence belongs to the DMRL synthase family.

It catalyses the reaction (2S)-2-hydroxy-3-oxobutyl phosphate + 5-amino-6-(D-ribitylamino)uracil = 6,7-dimethyl-8-(1-D-ribityl)lumazine + phosphate + 2 H2O + H(+). Its pathway is cofactor biosynthesis; riboflavin biosynthesis; riboflavin from 2-hydroxy-3-oxobutyl phosphate and 5-amino-6-(D-ribitylamino)uracil: step 1/2. In terms of biological role, catalyzes the formation of 6,7-dimethyl-8-ribityllumazine by condensation of 5-amino-6-(D-ribitylamino)uracil with 3,4-dihydroxy-2-butanone 4-phosphate. This is the penultimate step in the biosynthesis of riboflavin. In Afipia carboxidovorans (strain ATCC 49405 / DSM 1227 / KCTC 32145 / OM5) (Oligotropha carboxidovorans), this protein is 6,7-dimethyl-8-ribityllumazine synthase.